A 260-amino-acid polypeptide reads, in one-letter code: Ribosomal RNA small subunit methyltransferase J (260 aa).

S-adenosyl-L-methionine is bound by residues 125–126 (ER) and Asp-179.

Belongs to the methyltransferase superfamily. RsmJ family.

It is found in the cytoplasm. The enzyme catalyses guanosine(1516) in 16S rRNA + S-adenosyl-L-methionine = N(2)-methylguanosine(1516) in 16S rRNA + S-adenosyl-L-homocysteine + H(+). In terms of biological role, specifically methylates the guanosine in position 1516 of 16S rRNA. The sequence is that of Ribosomal RNA small subunit methyltransferase J from Pseudomonas entomophila (strain L48).